We begin with the raw amino-acid sequence, 482 residues long: 3-isopropylmalate dehydratase large subunit (482 aa).

A disordered region spans residues 60-79 (ATPDHNVPTTRAERQGGLES). Cys-353, Cys-414, and Cys-417 together coordinate [4Fe-4S] cluster.

This sequence belongs to the aconitase/IPM isomerase family. LeuC type 1 subfamily. As to quaternary structure, heterodimer of LeuC and LeuD. It depends on [4Fe-4S] cluster as a cofactor.

The catalysed reaction is (2R,3S)-3-isopropylmalate = (2S)-2-isopropylmalate. It participates in amino-acid biosynthesis; L-leucine biosynthesis; L-leucine from 3-methyl-2-oxobutanoate: step 2/4. Its function is as follows. Catalyzes the isomerization between 2-isopropylmalate and 3-isopropylmalate, via the formation of 2-isopropylmaleate. The chain is 3-isopropylmalate dehydratase large subunit from Xanthomonas euvesicatoria pv. vesicatoria (strain 85-10) (Xanthomonas campestris pv. vesicatoria).